The primary structure comprises 204 residues: Transcriptional regulator GfcR (204 aa).

This sequence belongs to the purine/pyrimidine phosphoribosyltransferase family. GfcR subfamily.

In Methanosarcina mazei (strain ATCC BAA-159 / DSM 3647 / Goe1 / Go1 / JCM 11833 / OCM 88) (Methanosarcina frisia), this protein is Transcriptional regulator GfcR.